The primary structure comprises 273 residues: Bifunctional protein FolD (273 aa).

NADP(+) is bound by residues 149 to 151 (GLG) and V215.

This sequence belongs to the tetrahydrofolate dehydrogenase/cyclohydrolase family. Homodimer.

The enzyme catalyses (6R)-5,10-methylene-5,6,7,8-tetrahydrofolate + NADP(+) = (6R)-5,10-methenyltetrahydrofolate + NADPH. It catalyses the reaction (6R)-5,10-methenyltetrahydrofolate + H2O = (6R)-10-formyltetrahydrofolate + H(+). Its pathway is one-carbon metabolism; tetrahydrofolate interconversion. Its function is as follows. Catalyzes the oxidation of 5,10-methylenetetrahydrofolate to 5,10-methenyltetrahydrofolate and then the hydrolysis of 5,10-methenyltetrahydrofolate to 10-formyltetrahydrofolate. In Mycoplasma genitalium (strain ATCC 33530 / DSM 19775 / NCTC 10195 / G37) (Mycoplasmoides genitalium), this protein is Bifunctional protein FolD.